A 795-amino-acid polypeptide reads, in one-letter code: uncharacterized protein (795 aa).

This is an uncharacterized protein from Methanocaldococcus jannaschii (strain ATCC 43067 / DSM 2661 / JAL-1 / JCM 10045 / NBRC 100440) (Methanococcus jannaschii).